Here is a 550-residue protein sequence, read N- to C-terminus: Chaperonin GroEL (550 aa).

ATP contacts are provided by residues 29–32 (TAGP), lysine 50, 86–90 (DGTTT), glycine 417, and aspartate 499.

It belongs to the chaperonin (HSP60) family. Forms a cylinder of 14 subunits composed of two heptameric rings stacked back-to-back. Interacts with the co-chaperonin GroES.

Its subcellular location is the cytoplasm. The enzyme catalyses ATP + H2O + a folded polypeptide = ADP + phosphate + an unfolded polypeptide.. In terms of biological role, together with its co-chaperonin GroES, plays an essential role in assisting protein folding. The GroEL-GroES system forms a nano-cage that allows encapsulation of the non-native substrate proteins and provides a physical environment optimized to promote and accelerate protein folding. This is Chaperonin GroEL from Ehrlichia chaffeensis.